The sequence spans 274 residues: Large ribosomal subunit protein uL2cz/uL2cy (274 aa).

Disordered stretches follow at residues 1–21 (MAIH…VDSQ) and 225–254 (PVDH…PALG).

This sequence belongs to the universal ribosomal protein uL2 family. As to quaternary structure, part of the 50S ribosomal subunit.

The protein localises to the plastid. Its subcellular location is the chloroplast. The protein is Large ribosomal subunit protein uL2cz/uL2cy (rpl2-A) of Draba nemorosa (Woodland whitlowgrass).